Reading from the N-terminus, the 525-residue chain is Bifunctional enzyme NanE/NanK (525 aa).

Residues 1–241 form a manNAc-6-P epimerase region; the sequence is MRGSPRNLCR…DAVESAAKPS (241 aa). The interval 242–525 is manNAc kinase; that stretch reads SPVLAFDIGG…VADLAATYFS (284 aa). Residues 246-253 and 372-379 each bind ATP; these read AFDIGGTK and GIGGGIVL.

In the N-terminal section; belongs to the NanE family. The protein in the C-terminal section; belongs to the ROK (NagC/XylR) family. NanK subfamily.

It carries out the reaction an N-acyl-D-glucosamine 6-phosphate = an N-acyl-D-mannosamine 6-phosphate. The catalysed reaction is an N-acyl-D-mannosamine + ATP = an N-acyl-D-mannosamine 6-phosphate + ADP + H(+). It functions in the pathway amino-sugar metabolism; N-acetylneuraminate degradation; D-fructose 6-phosphate from N-acetylneuraminate: step 2/5. It participates in amino-sugar metabolism; N-acetylneuraminate degradation; D-fructose 6-phosphate from N-acetylneuraminate: step 3/5. Functionally, converts N-acetylmannosamine-6-phosphate (ManNAc-6-P) to N-acetylglucosamine-6-phosphate (GlcNAc-6-P). Its function is as follows. Catalyzes the phosphorylation of N-acetylmannosamine (ManNAc) to ManNAc-6-P. The polypeptide is Bifunctional enzyme NanE/NanK (nanEK) (Brucella suis biovar 1 (strain 1330)).